The sequence spans 281 residues: Digeranylgeranylglyceryl phosphate synthase (281 aa).

7 consecutive transmembrane segments (helical) span residues 14–34 (AMAA…LSSA), 38–58 (VSLS…VTGA), 95–115 (LFLF…CGII), 149–169 (FLFG…VLFL), 207–227 (ASYI…VPYL), 235–255 (YLFV…QILG), and 259–279 (AARS…SFIV).

The protein belongs to the UbiA prenyltransferase family. DGGGP synthase subfamily. Mg(2+) is required as a cofactor.

Its subcellular location is the cell membrane. The enzyme catalyses sn-3-O-(geranylgeranyl)glycerol 1-phosphate + (2E,6E,10E)-geranylgeranyl diphosphate = 2,3-bis-O-(geranylgeranyl)-sn-glycerol 1-phosphate + diphosphate. The protein operates within membrane lipid metabolism; glycerophospholipid metabolism. In terms of biological role, prenyltransferase that catalyzes the transfer of the geranylgeranyl moiety of geranylgeranyl diphosphate (GGPP) to the C2 hydroxyl of (S)-3-O-geranylgeranylglyceryl phosphate (GGGP). This reaction is the second ether-bond-formation step in the biosynthesis of archaeal membrane lipids. This Methanococcoides burtonii (strain DSM 6242 / NBRC 107633 / OCM 468 / ACE-M) protein is Digeranylgeranylglyceryl phosphate synthase.